The primary structure comprises 460 residues: MATGKIIQVIGAVVDVEFPQDAVPKVYDALEVENGAEKLVLEVQQQLGGGIVRCIAMGSSDGLRRGLNVNNLGHPIEVPVGKATLGRIMNVLGDPIDMKGDIGEEERWAIHRSAPSYEELSNSQELLETGIKVIDLMCPFAKGGKVGLFGGAGVGKTVNMMELIRNIAIEHSGYSVFAGVGERTREGNDFYHEMTDSNVIDKVSLVYGQMNEPPGNRLRVALTGLTMAEKFRDEGRDVLLFVDNIYRYTLAGTEVSALLGRMPSAVGYQPTLAEEMGVLQERITSTKTGSITSVQAVYVPADDLTDPSPATTFAHLDATVVLSRQIASLGIYPAVDPLDSTSRQLDPLVVGQEHYDVARGVQSILQRYQELKDIIAILGMDELSEEDKLVVSRARKIQRFLSQPFFVAEVFTGSPGKYVSLKDTIRGFKGIMEGEYDHLPEQAFYMVGSIDEVVEKAKKL.

Residue 150–157 (GGAGVGKT) coordinates ATP.

This sequence belongs to the ATPase alpha/beta chains family. In terms of assembly, F-type ATPases have 2 components, CF(1) - the catalytic core - and CF(0) - the membrane proton channel. CF(1) has five subunits: alpha(3), beta(3), gamma(1), delta(1), epsilon(1). CF(0) has three main subunits: a(1), b(2) and c(9-12). The alpha and beta chains form an alternating ring which encloses part of the gamma chain. CF(1) is attached to CF(0) by a central stalk formed by the gamma and epsilon chains, while a peripheral stalk is formed by the delta and b chains.

It is found in the cell inner membrane. It catalyses the reaction ATP + H2O + 4 H(+)(in) = ADP + phosphate + 5 H(+)(out). Its function is as follows. Produces ATP from ADP in the presence of a proton gradient across the membrane. The catalytic sites are hosted primarily by the beta subunits. This Pectobacterium atrosepticum (strain SCRI 1043 / ATCC BAA-672) (Erwinia carotovora subsp. atroseptica) protein is ATP synthase subunit beta.